A 142-amino-acid chain; its full sequence is Lipoprotein MlpI (142 aa).

The first 17 residues, Met1–Ser17, serve as a signal peptide directing secretion. Cys18 is lipidated: N-palmitoyl cysteine. A lipid anchor (S-diacylglycerol cysteine) is attached at Cys18. Residues Asp22–Arg54 are disordered. Residues Lys33–Arg54 are compositionally biased toward basic and acidic residues.

The protein belongs to the Multicopy lipoprotein (Mlp) family.

It is found in the cell outer membrane. Functionally, an outer membrane protein that may participate in pathogenesis. Some human Lyme disease patients have antibodies against this protein. The Mlp proteins probably undergo intragenic recombination, generating new alleles. The protein is Lipoprotein MlpI of Borreliella burgdorferi (strain ATCC 35210 / DSM 4680 / CIP 102532 / B31) (Borrelia burgdorferi).